The following is a 383-amino-acid chain: S-adenosylmethionine synthase (383 aa).

Histidine 15 contributes to the ATP binding site. Residue aspartate 17 coordinates Mg(2+). Glutamate 43 contributes to the K(+) binding site. L-methionine is bound by residues glutamate 56 and glutamine 99. Positions 99-109 (QSPDINQGVDR) are flexible loop. ATP-binding positions include 164–166 (DAK), 230–231 (RF), aspartate 239, 245–246 (RK), alanine 262, and lysine 266. Aspartate 239 serves as a coordination point for L-methionine. Lysine 270 is an L-methionine binding site.

It belongs to the AdoMet synthase family. In terms of assembly, homotetramer; dimer of dimers. It depends on Mg(2+) as a cofactor. The cofactor is K(+).

The protein localises to the cytoplasm. The enzyme catalyses L-methionine + ATP + H2O = S-adenosyl-L-methionine + phosphate + diphosphate. Its pathway is amino-acid biosynthesis; S-adenosyl-L-methionine biosynthesis; S-adenosyl-L-methionine from L-methionine: step 1/1. Catalyzes the formation of S-adenosylmethionine (AdoMet) from methionine and ATP. The overall synthetic reaction is composed of two sequential steps, AdoMet formation and the subsequent tripolyphosphate hydrolysis which occurs prior to release of AdoMet from the enzyme. In Pectobacterium atrosepticum (strain SCRI 1043 / ATCC BAA-672) (Erwinia carotovora subsp. atroseptica), this protein is S-adenosylmethionine synthase.